A 212-amino-acid chain; its full sequence is RNA chaperone ProQ (212 aa).

The interval 107 to 153 (QDKAKAKRVAQAKSANPAAKTAKKPVKKPVAKRPKQTQSSKPAKEPV) is disordered. Low complexity predominate over residues 117–126 (QAKSANPAAK). Over residues 127 to 141 (TAKKPVKKPVAKRPK) the composition is skewed to basic residues.

It belongs to the ProQ family.

Its subcellular location is the cytoplasm. Functionally, RNA chaperone with significant RNA binding, RNA strand exchange and RNA duplexing activities. In Shewanella halifaxensis (strain HAW-EB4), this protein is RNA chaperone ProQ.